The primary structure comprises 235 residues: Protein GMH1 homolog (235 aa).

Topologically, residues 1 to 54 are cytoplasmic; the sequence is MSRSFRNGFRLLKLSQMDFERAWWDMANLFRAPRRVYRSITLRKQNINRYGRED. Residues 55–75 form a helical membrane-spanning segment; that stretch reads FSFIVLFSCMIVISALLWALF. The Lumenal segment spans residues 76–88; it reads YMNTPKGYVTTIT. Residues 89-109 traverse the membrane as a helical segment; sequence FMLFVDFGAVGVIMATMYYFI. Topologically, residues 110 to 140 are cytoplasmic; that stretch reads AKRFLMKSNDTILSSTDYQLEWNYCFDVHCN. Residues 141–161 traverse the membrane as a helical segment; the sequence is SFFPSFVLLYVIQLFLLPVIT. Topologically, residues 162 to 175 are lumenal; it reads RDNFISLFMGNTLY. A helical membrane pass occupies residues 176–196; that stretch reads LVALCYYSYLTFIGYQILPFL. Residues 197–201 lie on the Cytoplasmic side of the membrane; sequence KNTHA. A helical membrane pass occupies residues 202-222; the sequence is LLLPIPMFFIMWALSLLGFNV. Topologically, residues 223–235 are lumenal; sequence PKHVVDVYFGKSA.

It belongs to the unc-50 family.

Its subcellular location is the endoplasmic reticulum membrane. Functionally, has a role in meiosis. The sequence is that of Protein GMH1 homolog (mug16) from Schizosaccharomyces pombe (strain 972 / ATCC 24843) (Fission yeast).